We begin with the raw amino-acid sequence, 320 residues long: Cytochrome f (320 aa).

An N-terminal signal peptide occupies residues 1-35; that stretch reads MQTRNAFSWLKKQITRSISVSLMIYILTRTSISSA. The heme site is built by Tyr-36, Cys-56, Cys-59, and His-60. The helical transmembrane segment at 286–306 threads the bilayer; the sequence is VQGLLFFLASVILAQIFLVLK.

Belongs to the cytochrome f family. In terms of assembly, the 4 large subunits of the cytochrome b6-f complex are cytochrome b6, subunit IV (17 kDa polypeptide, petD), cytochrome f and the Rieske protein, while the 4 small subunits are PetG, PetL, PetM and PetN. The complex functions as a dimer. Heme is required as a cofactor.

It localises to the plastid. The protein localises to the chloroplast thylakoid membrane. Functionally, component of the cytochrome b6-f complex, which mediates electron transfer between photosystem II (PSII) and photosystem I (PSI), cyclic electron flow around PSI, and state transitions. This Nicotiana sylvestris (Wood tobacco) protein is Cytochrome f.